Consider the following 114-residue polypeptide: Prefoldin subunit 6 (114 aa).

Ser-2 is subject to N-acetylserine.

The protein belongs to the prefoldin subunit beta family. In terms of assembly, heterohexamer of two PFD-alpha type and four PFD-beta type subunits.

It is found in the nucleus. In terms of biological role, binds specifically to cytosolic chaperonin (c-CPN) and transfers target proteins to it. Binds to nascent polypeptide chain and promotes folding in an environment in which there are many competing pathways for nonnative proteins. This Saccharomyces cerevisiae (strain ATCC 204508 / S288c) (Baker's yeast) protein is Prefoldin subunit 6 (YKE2).